The sequence spans 558 residues: Adenine deaminase (558 aa).

It belongs to the metallo-dependent hydrolases superfamily. Adenine deaminase family. Requires Mn(2+) as cofactor.

The catalysed reaction is adenine + H2O + H(+) = hypoxanthine + NH4(+). The polypeptide is Adenine deaminase (Deinococcus deserti (strain DSM 17065 / CIP 109153 / LMG 22923 / VCD115)).